We begin with the raw amino-acid sequence, 249 residues long: Caffeoyl-CoA O-methyltransferase (249 aa).

Residue Lys-21 participates in substrate binding. S-adenosyl-L-methionine contacts are provided by residues Thr-63, Glu-85, 87 to 88 (GV), Ser-93, Asp-111, and Ala-140. Asp-162 contacts substrate. Asp-162 is a binding site for a divalent metal cation. Position 164 (Asp-164) interacts with S-adenosyl-L-methionine. The a divalent metal cation site is built by Asp-188 and Asn-189. Asn-193 serves as a coordination point for substrate.

This sequence belongs to the class I-like SAM-binding methyltransferase superfamily. Cation-dependent O-methyltransferase family. CCoAMT subfamily. In terms of assembly, homodimer. It depends on a divalent metal cation as a cofactor.

It carries out the reaction (E)-caffeoyl-CoA + S-adenosyl-L-methionine = (E)-feruloyl-CoA + S-adenosyl-L-homocysteine + H(+). Its pathway is aromatic compound metabolism; phenylpropanoid biosynthesis. Methylates caffeoyl-CoA to feruloyl-CoA and 5-hydroxyferuloyl-CoA to sinapoyl-CoA. Plays a role in the synthesis of feruloylated polysaccharides. Involved in the reinforcement of the plant cell wall. Also involved in the responding to wounding or pathogen challenge by the increased formation of cell wall-bound ferulic acid polymers. The sequence is that of Caffeoyl-CoA O-methyltransferase from Eucalyptus gunnii (Cider gum).